A 445-amino-acid chain; its full sequence is RCC1 domain-containing protein RUG3, mitochondrial (445 aa).

The N-terminal 22 residues, 1 to 22, are a transit peptide targeting the mitochondrion; the sequence is MAALSHRLRSFTRRFSSTRTTQ. RCC1 repeat units lie at residues 47-101, 118-169, 171-221, 222-279, 280-331, 333-383, and 385-442; these read TLQL…DSSS, DGDL…ALTH, GDVF…AITE, SGEL…ALTK, EGQL…ALTE, GKVL…AITD, and GELW…CLVS.

As to quaternary structure, interacts with ATM. As to expression, mostly expressed in roots and rosette leaves of young seedlings, and, to a lower extent, in the flowers and siliques of mature plants. Preferentially expressed in the vascular tissues.

The protein localises to the mitochondrion. Functionally, regulates DNA damage response (DDR) synergistically with ATM. Together with ATM, involved in the splicing of the ND2/NAD2 mRNA. Required for the accumulation of mitochondrial respiratory chain complex I. Negative regulator of plant responses to abscisic acid (ABA). May have a pivotal role in vegetative growth and the phase transition from vegetative to reproductive growth. This Arabidopsis thaliana (Mouse-ear cress) protein is RCC1 domain-containing protein RUG3, mitochondrial.